Here is a 149-residue protein sequence, read N- to C-terminus: Large ribosomal subunit protein eL24B (149 aa).

The residue at position 50 (Ser50) is a Phosphoserine. The interval 96 to 149 (QRPEVRAAARAAALKQRKDKRAASESEKKAIKAKSAASSARGQAIKNAKVAARR) is disordered. The segment covering 116–125 (RAASESEKKA) has biased composition (basic and acidic residues).

It belongs to the eukaryotic ribosomal protein eL24 family. Component of the large ribosomal subunit (LSU). Mature yeast ribosomes consist of a small (40S) and a large (60S) subunit. The 40S small subunit contains 1 molecule of ribosomal RNA (18S rRNA) and at least 33 different proteins. The large 60S subunit contains 3 rRNA molecules (25S, 5.8S and 5S rRNA) and at least 46 different proteins.

It is found in the cytoplasm. Component of the ribosome, a large ribonucleoprotein complex responsible for the synthesis of proteins in the cell. The small ribosomal subunit (SSU) binds messenger RNAs (mRNAs) and translates the encoded message by selecting cognate aminoacyl-transfer RNA (tRNA) molecules. The large subunit (LSU) contains the ribosomal catalytic site termed the peptidyl transferase center (PTC), which catalyzes the formation of peptide bonds, thereby polymerizing the amino acids delivered by tRNAs into a polypeptide chain. The nascent polypeptides leave the ribosome through a tunnel in the LSU and interact with protein factors that function in enzymatic processing, targeting, and the membrane insertion of nascent chains at the exit of the ribosomal tunnel. In Schizosaccharomyces pombe (strain 972 / ATCC 24843) (Fission yeast), this protein is Large ribosomal subunit protein eL24B (rpl2402).